The sequence spans 190 residues: Transcription antitermination protein NusB (190 aa).

A disordered region spans residues 135–190 (APAPESVAEEADEESSDSAAAASEPTDEGDVSDSPDSSGASDEPAAPSAEIQPTVD). The segment covering 141–150 (VAEEADEESS) has biased composition (acidic residues).

Belongs to the NusB family.

Involved in transcription antitermination. Required for transcription of ribosomal RNA (rRNA) genes. Binds specifically to the boxA antiterminator sequence of the ribosomal RNA (rrn) operons. This Bifidobacterium longum (strain DJO10A) protein is Transcription antitermination protein NusB.